Here is a 480-residue protein sequence, read N- to C-terminus: Trigger factor (480 aa).

The PPIase FKBP-type domain maps to 169 to 264 (GDIAVVDFKG…LKELKEKELP (96 aa)). Residues 441-480 (PEGSLSPAEETEAAESDADADVSQTEQENSEPSTTEVTEG) are disordered. The segment covering 449 to 460 (EETEAAESDADA) has biased composition (acidic residues). The segment covering 462–480 (VSQTEQENSEPSTTEVTEG) has biased composition (polar residues).

This sequence belongs to the FKBP-type PPIase family. Tig subfamily.

The protein resides in the cytoplasm. The enzyme catalyses [protein]-peptidylproline (omega=180) = [protein]-peptidylproline (omega=0). Its function is as follows. Involved in protein export. Acts as a chaperone by maintaining the newly synthesized protein in an open conformation. Functions as a peptidyl-prolyl cis-trans isomerase. The protein is Trigger factor of Nostoc punctiforme (strain ATCC 29133 / PCC 73102).